The chain runs to 332 residues: tRNA N6-adenosine threonylcarbamoyltransferase (332 aa).

Fe cation contacts are provided by His107 and His111. Residues 129–133 (LVSGG), Asp162, Gly175, and Asn267 contribute to the substrate site. Asp295 provides a ligand contact to Fe cation.

The protein belongs to the KAE1 / TsaD family. Fe(2+) serves as cofactor.

The protein resides in the cytoplasm. The enzyme catalyses L-threonylcarbamoyladenylate + adenosine(37) in tRNA = N(6)-L-threonylcarbamoyladenosine(37) in tRNA + AMP + H(+). Required for the formation of a threonylcarbamoyl group on adenosine at position 37 (t(6)A37) in tRNAs that read codons beginning with adenine. Is involved in the transfer of the threonylcarbamoyl moiety of threonylcarbamoyl-AMP (TC-AMP) to the N6 group of A37, together with TsaE and TsaB. TsaD likely plays a direct catalytic role in this reaction. The polypeptide is tRNA N6-adenosine threonylcarbamoyltransferase (Campylobacter hominis (strain ATCC BAA-381 / DSM 21671 / CCUG 45161 / LMG 19568 / NCTC 13146 / CH001A)).